A 142-amino-acid polypeptide reads, in one-letter code: Hemoglobin F-I (142 aa).

The 141-residue stretch at 2 to 142 folds into the Globin domain; that stretch reads GLTTAQIKAI…AAGVLVAAMK (141 aa). Residue His95 coordinates heme b.

It belongs to the globin family. As to quaternary structure, homotetramer.

Its function is as follows. Hemoglobin F-I appears to function in storage, rather than transport of oxygen. This Urechis caupo (Innkeeper worm) protein is Hemoglobin F-I.